Here is a 60-residue protein sequence, read N- to C-terminus: Large ribosomal subunit protein uL30 (60 aa).

The protein belongs to the universal ribosomal protein uL30 family. As to quaternary structure, part of the 50S ribosomal subunit.

This chain is Large ribosomal subunit protein uL30, found in Bacillus mycoides (strain KBAB4) (Bacillus weihenstephanensis).